Consider the following 272-residue polypeptide: L-aspartate dehydrogenase (272 aa).

The NAD(+) site is built by Ala-125 and Asn-192. Residue His-222 is part of the active site.

It belongs to the L-aspartate dehydrogenase family.

The enzyme catalyses L-aspartate + NADP(+) + H2O = oxaloacetate + NH4(+) + NADPH + H(+). It catalyses the reaction L-aspartate + NAD(+) + H2O = oxaloacetate + NH4(+) + NADH + H(+). It participates in cofactor biosynthesis; NAD(+) biosynthesis; iminoaspartate from L-aspartate (dehydrogenase route): step 1/1. In terms of biological role, specifically catalyzes the NAD or NADP-dependent dehydrogenation of L-aspartate to iminoaspartate. The protein is L-aspartate dehydrogenase of Nitrosopumilus maritimus (strain SCM1).